Consider the following 472-residue polypeptide: 3-isopropylmalate dehydratase large subunit (472 aa).

C353, C414, and C417 together coordinate [4Fe-4S] cluster.

This sequence belongs to the aconitase/IPM isomerase family. LeuC type 1 subfamily. As to quaternary structure, heterodimer of LeuC and LeuD. The cofactor is [4Fe-4S] cluster.

It catalyses the reaction (2R,3S)-3-isopropylmalate = (2S)-2-isopropylmalate. The protein operates within amino-acid biosynthesis; L-leucine biosynthesis; L-leucine from 3-methyl-2-oxobutanoate: step 2/4. Catalyzes the isomerization between 2-isopropylmalate and 3-isopropylmalate, via the formation of 2-isopropylmaleate. The polypeptide is 3-isopropylmalate dehydratase large subunit (Psychrobacter arcticus (strain DSM 17307 / VKM B-2377 / 273-4)).